A 692-amino-acid chain; its full sequence is Elongation factor G (692 aa).

The 275-residue stretch at Glu8–Thr282 folds into the tr-type G domain. GTP-binding positions include Ala17–Thr24, Asp81–His85, and Asn135–Asp138.

Belongs to the TRAFAC class translation factor GTPase superfamily. Classic translation factor GTPase family. EF-G/EF-2 subfamily.

Its subcellular location is the cytoplasm. In terms of biological role, catalyzes the GTP-dependent ribosomal translocation step during translation elongation. During this step, the ribosome changes from the pre-translocational (PRE) to the post-translocational (POST) state as the newly formed A-site-bound peptidyl-tRNA and P-site-bound deacylated tRNA move to the P and E sites, respectively. Catalyzes the coordinated movement of the two tRNA molecules, the mRNA and conformational changes in the ribosome. The chain is Elongation factor G from Bacillus velezensis (strain DSM 23117 / BGSC 10A6 / LMG 26770 / FZB42) (Bacillus amyloliquefaciens subsp. plantarum).